Here is a 1001-residue protein sequence, read N- to C-terminus: E3 ubiquitin-protein ligase etc-1 (1001 aa).

Residues 28 to 57 (QEKAARKVQKFWRGHRVQHNQRLLFRAEFD) enclose the IQ domain. A coiled-coil region spans residues 66-115 (LEETIKMAQLLVNFYETNKDEERLVMTLSELVKLKTSDKEFEKRIRETQR). The HECT domain occupies 658–1001 (KVNDLKSMVR…INSGAGFELA (344 aa)). Cys969 functions as the Glycyl thioester intermediate in the catalytic mechanism.

Interacts with ify-1 and cyb-1.

It catalyses the reaction S-ubiquitinyl-[E2 ubiquitin-conjugating enzyme]-L-cysteine + [acceptor protein]-L-lysine = [E2 ubiquitin-conjugating enzyme]-L-cysteine + N(6)-ubiquitinyl-[acceptor protein]-L-lysine.. It functions in the pathway protein modification; protein ubiquitination. E3 ubiquitin-protein ligase that accepts ubiquitin from E2 ubiquitin-conjugating enzymes, such as ubc-18, in the form of a thioester and then directly transfers the ubiquitin to targeted substrates. Ubiquitinates ify-1 and cyb-1 targeting them for degradation in post-meiotic embryos. This Caenorhabditis elegans protein is E3 ubiquitin-protein ligase etc-1.